We begin with the raw amino-acid sequence, 120 residues long: Non-specific lipid-transfer protein (120 aa).

Positions 1 to 26 (MASSMSLKLACVVVLCMVVGAPLAQG) are cleaved as a signal peptide. 3 cysteine pairs are disulfide-bonded: Cys-40/Cys-56, Cys-57/Cys-102, and Cys-77/Cys-116.

The protein belongs to the plant LTP family.

Plant non-specific lipid-transfer proteins transfer phospholipids as well as galactolipids across membranes. May play a role in wax or cutin deposition in the cell walls of expanding epidermal cells and certain secretory tissues. The polypeptide is Non-specific lipid-transfer protein (Gossypium hirsutum (Upland cotton)).